Reading from the N-terminus, the 356-residue chain is Cyanide hydratase (356 aa).

The CN hydrolase domain occupies 15–290 (FKVAAVQAEP…EVVLYANISL (276 aa)). E55 acts as the Proton acceptor in catalysis. Residue K137 is part of the active site. C172 serves as the catalytic Nucleophile. The segment at 331–356 (DEQAASKAQQAEIDNAGKGSIVPSKL) is disordered.

Belongs to the carbon-nitrogen hydrolase superfamily. Nitrilase family.

The catalysed reaction is formamide = hydrogen cyanide + H2O. Catalyzes the hydration of cyanide to formamide. Degradation of cyanide may be important for plant pathogenic fungi in infection of cyanogenic plants. The polypeptide is Cyanide hydratase (Armillaria gallica (Bulbous honey fungus)).